The following is a 434-amino-acid chain: uncharacterized protein (434 aa).

At Lys216 the chain carries N6-(pyridoxal phosphate)lysine.

This is an uncharacterized protein from Schizosaccharomyces pombe (strain 972 / ATCC 24843) (Fission yeast).